Reading from the N-terminus, the 410-residue chain is Acetate kinase (410 aa).

Residue asparagine 7 coordinates Mg(2+). Position 14 (lysine 14) interacts with ATP. Arginine 88 is a binding site for substrate. Aspartate 145 functions as the Proton donor/acceptor in the catalytic mechanism. ATP is bound by residues histidine 203–glycine 207, aspartate 278–arginine 280, and glycine 326–asparagine 330. Residue glutamate 379 coordinates Mg(2+).

Belongs to the acetokinase family. As to quaternary structure, homodimer. Requires Mg(2+) as cofactor. Mn(2+) is required as a cofactor.

It is found in the cytoplasm. The enzyme catalyses acetate + ATP = acetyl phosphate + ADP. Its pathway is metabolic intermediate biosynthesis; acetyl-CoA biosynthesis; acetyl-CoA from acetate: step 1/2. Its function is as follows. Catalyzes the formation of acetyl phosphate from acetate and ATP. Can also catalyze the reverse reaction. The chain is Acetate kinase from Onion yellows phytoplasma (strain OY-M).